Here is a 2545-residue protein sequence, read N- to C-terminus: MNKFFQILEYFKIELSINFSITFIFINILLVFFSTFLYRNIKKVNDPDSYKTSYERKEKDSTFDEEENFDILNIFSNDPKSVENIYELENDIYNKSEESSICSNHNKNLDEKTYKINKKKVTIYLKLNEGLENIKQELHIIDRELKNILQKEENLQLINEEENIIIEKTKSDKYDEKENKSNDNILSKKHDDENINKSDIRNTLDSELKKKYELCKENNQLLENHHNNDNNQEDNNICEIEKQDYNNYNSDNKNHNDIFNYNYEDISLEKDKNIHHTKEITKNDTLCNTLDSIKNNRPTEEKTKNFNYNETNIYEENKKLKDSIVNSKNGENFLLKNNEQNINNNIINVNQKQSSDHKKESFKIDTKKNDQIEQNYQNGKNEKNEENEKNGMNEQNGKNEQNGKNEQNGKNEQNEQNDQIEQNYQNDPNDQNDQNDQNEKNDQNEKNDQNKKNEQNIGPKKTNEISYDSININISNNQNPKLSNVFVEDIKRILPISNNNLENSITTIKNIDDPSNSTKQELQNSDYENMHANKKIENGKESFICDITSNTNITRNSMDIPNIMDRKKSEYDKEVDNVSIKKKSYINHNMQRENTREDPSNNMDYTNKSTSDSNDIENENKMERCTNILGLDKRETVIKINDINKDNKHTNGIKCEDKRKSTSIHMEDINNSTNYLNNKEYNSKGENNNNILGDDKRESTFKIYDIQKSEYNSNDLQYDNKRERTSINLDNGNKNNVDINNYINVDDTKERISINLDNVNKNNVDINNYINDDNTKERTSINLDNGNKNNVDINNYINDDNTKERTSINLDNGNKNNVDINNYINDDNTKERTSINLDNGNKNNVDINNYINVDNTKERTSINLDNGNKKNVDINNYINDDNTKERTSINLDNGNKNNVDINNCINVEDKRERYSHILNINKRESIIKINDMKKTKSDSNDIKINDNRTEMYSNIFEINEKERTSIKVDTVKENKSDSNDIENGNKIERHSNVLYINPTKFDPIKINDINKKGERYYDNIENEDKREIYTNNDEYMDKRESNTNHIYINKKESYLENAKDVIKKESPLNNVEDTKKEESYSKNIENANKEEYESNEETYVNKMEEDSNDIEDISNRKYEYKEGQYLNKGEKYINNIDNVSIKESYYNKREKESIEISNLNKRESCTSNINNFRIRENQSNMVEYENKRKSDNIEINNLNKADIYVNSIKNVSKRNSSYNKKERDSKKDRDSVYDENRRKSSAYQINDIYNIRDKSKEKIDMDTIQDMNKRKSYVDNIHITNKKYSDINNAEDVIREKKYEDYNISVMYNMHNKRDQRKESNINIYNDNNMRRSTINKINDENSMHNVKNEIKNIDNNNNVDKINVNKSNTDKIYMDKIYMDKIYMDKRYMDKRYMDKRYMNKRYMDKIYMDKIYMDKIYMDKIYMDNEYMTDNIIKKNDKYNNNNNNNNSDVVEYVNERKHTSLINEHYLYERKSNVDKMKDINKGENDILYDVYNNSEKKNTKSSLYRNPEIITQGGNDNINNMNEHISSLNKVYRISNKKSNNNYKGQDYTYIVNENSGRNSSMYNNINNSDNMNKKECDFINDKENINKRISEIYDLRQINHNESNIENMENIKNMENIKNMENIKNMENIEHIKNMENMEHIKNIQNIEHIKNIENIQNIQNMEHIKNIESIQNIQNMEHIQNIENIQNIENIQNIENIKTIENIKKNIENINNKGSLMVNSNNINENIKKESDIYKIECDDDHMCDVTKIKGVDKQMSDTHKIKYDDNEKNNENKRKSGINKVFDIIKRTMDSYNIYNLSKCKIDEDNIYMLNEKKKNNINNMNKRKSENTYNINEREKDDMNRRMTENTYNLNKEKNLSVHNIKNIQPYNINNNIYEKTNDTIDNLNETGKNNTNDISIKGSDKNKEYKFYDNENKDNINMIIRDTINMSNLNNNISDNMQMAIHKEEKNIHKMNRKITYTNNLYNINESKTEYTININEQEEKSDFINNDNIKMDNEDKLYNCNERNNHIHKENKRNDIKYDNFKKDNIRKNMDNTKNIENMNNIDNMDNTKHIENVNNMKNIENVNNINNIDNMDNKKHIENVNNMKNIENVNNINNIDNMDNKKHIENINNMKNMENMNNINNIENMNNMKNIENMNNMKNIENMNNINNIENINNMKNIQNINNIENMDNMNNTKYIENMDNMNNIENMNNINNYNKIYDVNIINNKNYDSTYNELYEKDNQEENKNICNDKLDNSINEKTKYMKTLREYFVKSEKEIEDQKKNNMNDMYTRREEEKIKDNEDWKLYDFKNLKEKYKFQMNMKDSEINQLQNNLIDEFKELNEVSKLKNNLKGKTYNSNIGEEMLEENKEKQHGNYVGEYFDRNDMILKERIFEYAKHKTSIDMLKHPDDIKRNSKDLKKWKSQVITKKYADDWLSSDVLLSCFLNFIKLKKYVNITELSVKFQTTTDDIREKLEELEEQDMINGVLDEKGNYIYLSQEEINKLCFEIQSKGKVNTHDDFVKICNKVISLSVNDKDMEKLKEEEEKIIKAKTEIF.

The chain crosses the membrane as a helical span at residues 17-37 (INFSITFIFINILLVFFSTFL). A coiled-coil region spans residues 131–161 (LENIKQELHIIDRELKNILQKEENLQLINEE). Disordered stretches follow at residues 348-462 (NVNQ…PKKT), 587-616 (NHNM…SNDI), and 1214-1238 (RNSS…ENRR). 3 stretches are compositionally biased toward basic and acidic residues: residues 354–371 (SSDH…KNDQ), 380–391 (KNEKNEENEKNG), and 401–413 (QNGK…KNEQ). Over residues 414 to 435 (NEQNDQIEQNYQNDPNDQNDQN) the composition is skewed to low complexity. 2 stretches are compositionally biased toward basic and acidic residues: residues 437–454 (QNEK…KKNE) and 590–599 (MQRENTREDP). Residues 600 to 613 (SNNMDYTNKSTSDS) show a composition bias toward polar residues. Over residues 1219–1238 (NKKERDSKKDRDSVYDENRR) the composition is skewed to basic and acidic residues. Residues 2303 to 2337 (KEKYKFQMNMKDSEINQLQNNLIDEFKELNEVSKL) adopt a coiled-coil conformation.

It is found in the membrane. This is an uncharacterized protein from Plasmodium falciparum (isolate 3D7).